The primary structure comprises 153 residues: Endoribonuclease YbeY (153 aa).

3 residues coordinate Zn(2+): H114, H118, and H124.

Belongs to the endoribonuclease YbeY family. It depends on Zn(2+) as a cofactor.

The protein resides in the cytoplasm. Its function is as follows. Single strand-specific metallo-endoribonuclease involved in late-stage 70S ribosome quality control and in maturation of the 3' terminus of the 16S rRNA. The chain is Endoribonuclease YbeY from Nitrosococcus oceani (strain ATCC 19707 / BCRC 17464 / JCM 30415 / NCIMB 11848 / C-107).